The primary structure comprises 266 residues: Undecaprenyl-diphosphatase (266 aa).

The next 8 membrane-spanning stretches (helical) occupy residues 1–21 (MTLF…FLPI), 39–59 (QGLA…MIYF), 87–107 (WYVI…KGWI), 113–133 (TALV…YADA), 143–163 (GLTL…LIPG), 187–207 (FSFL…TLDL), 218–238 (ALLY…YLFL), and 244–264 (IGML…LWFV).

It belongs to the UppP family.

It is found in the cell inner membrane. It carries out the reaction di-trans,octa-cis-undecaprenyl diphosphate + H2O = di-trans,octa-cis-undecaprenyl phosphate + phosphate + H(+). Functionally, catalyzes the dephosphorylation of undecaprenyl diphosphate (UPP). Confers resistance to bacitracin. The protein is Undecaprenyl-diphosphatase of Alteromonas mediterranea (strain DSM 17117 / CIP 110805 / LMG 28347 / Deep ecotype).